The following is a 255-amino-acid chain: tRNA (guanine-N(7)-)-methyltransferase (255 aa).

The disordered stretch occupies residues 1–29 (MMHDDPNEAGLPPDDAALPDEAADGADEV). Over residues 17–27 (ALPDEAADGAD) the composition is skewed to acidic residues. Residues glutamate 86, glutamate 111, aspartate 138, and aspartate 161 each coordinate S-adenosyl-L-methionine. Residue aspartate 161 is part of the active site. Substrate is bound by residues lysine 165, aspartate 197, and 232 to 235 (TKFE).

The protein belongs to the class I-like SAM-binding methyltransferase superfamily. TrmB family.

It catalyses the reaction guanosine(46) in tRNA + S-adenosyl-L-methionine = N(7)-methylguanosine(46) in tRNA + S-adenosyl-L-homocysteine. Its pathway is tRNA modification; N(7)-methylguanine-tRNA biosynthesis. Functionally, catalyzes the formation of N(7)-methylguanine at position 46 (m7G46) in tRNA. This is tRNA (guanine-N(7)-)-methyltransferase from Burkholderia ambifaria (strain ATCC BAA-244 / DSM 16087 / CCUG 44356 / LMG 19182 / AMMD) (Burkholderia cepacia (strain AMMD)).